The sequence spans 456 residues: Bifunctional protein GlmU (456 aa).

The segment at 1-229 (MLNNAMSVVI…LSEVEGVNNR (229 aa)) is pyrophosphorylase. UDP-N-acetyl-alpha-D-glucosamine contacts are provided by residues 11-14 (LAAG), Lys25, Gln76, 81-82 (GT), 103-105 (YGD), Gly140, Glu154, Asn169, and Asn227. Mg(2+) is bound at residue Asp105. Mg(2+) is bound at residue Asn227. The tract at residues 230–250 (LQLSRLERVYQSEQAEKLLLA) is linker. The interval 251–456 (GVMLRDPARF…EGWRRPVKKK (206 aa)) is N-acetyltransferase. UDP-N-acetyl-alpha-D-glucosamine contacts are provided by Arg333 and Lys351. Residue His363 is the Proton acceptor of the active site. UDP-N-acetyl-alpha-D-glucosamine-binding residues include Tyr366 and Asn377. Acetyl-CoA is bound by residues Ala380, 386–387 (NY), Ser405, Ala423, and Arg440.

This sequence in the N-terminal section; belongs to the N-acetylglucosamine-1-phosphate uridyltransferase family. The protein in the C-terminal section; belongs to the transferase hexapeptide repeat family. As to quaternary structure, homotrimer. It depends on Mg(2+) as a cofactor.

The protein localises to the cytoplasm. It catalyses the reaction alpha-D-glucosamine 1-phosphate + acetyl-CoA = N-acetyl-alpha-D-glucosamine 1-phosphate + CoA + H(+). The catalysed reaction is N-acetyl-alpha-D-glucosamine 1-phosphate + UTP + H(+) = UDP-N-acetyl-alpha-D-glucosamine + diphosphate. It participates in nucleotide-sugar biosynthesis; UDP-N-acetyl-alpha-D-glucosamine biosynthesis; N-acetyl-alpha-D-glucosamine 1-phosphate from alpha-D-glucosamine 6-phosphate (route II): step 2/2. It functions in the pathway nucleotide-sugar biosynthesis; UDP-N-acetyl-alpha-D-glucosamine biosynthesis; UDP-N-acetyl-alpha-D-glucosamine from N-acetyl-alpha-D-glucosamine 1-phosphate: step 1/1. The protein operates within bacterial outer membrane biogenesis; LPS lipid A biosynthesis. In terms of biological role, catalyzes the last two sequential reactions in the de novo biosynthetic pathway for UDP-N-acetylglucosamine (UDP-GlcNAc). The C-terminal domain catalyzes the transfer of acetyl group from acetyl coenzyme A to glucosamine-1-phosphate (GlcN-1-P) to produce N-acetylglucosamine-1-phosphate (GlcNAc-1-P), which is converted into UDP-GlcNAc by the transfer of uridine 5-monophosphate (from uridine 5-triphosphate), a reaction catalyzed by the N-terminal domain. The chain is Bifunctional protein GlmU from Escherichia coli O157:H7 (strain EC4115 / EHEC).